We begin with the raw amino-acid sequence, 726 residues long: 1,4-alpha-glucan branching enzyme GlgB (726 aa).

The active-site Nucleophile is Asp407. Glu460 acts as the Proton donor in catalysis.

It belongs to the glycosyl hydrolase 13 family. GlgB subfamily. In terms of assembly, monomer.

The enzyme catalyses Transfers a segment of a (1-&gt;4)-alpha-D-glucan chain to a primary hydroxy group in a similar glucan chain.. The protein operates within glycan biosynthesis; glycogen biosynthesis. Its function is as follows. Catalyzes the formation of the alpha-1,6-glucosidic linkages in glycogen by scission of a 1,4-alpha-linked oligosaccharide from growing alpha-1,4-glucan chains and the subsequent attachment of the oligosaccharide to the alpha-1,6 position. The sequence is that of 1,4-alpha-glucan branching enzyme GlgB from Hydrogenovibrio crunogenus (strain DSM 25203 / XCL-2) (Thiomicrospira crunogena).